A 246-amino-acid polypeptide reads, in one-letter code: MKICIFFTLLGTVAAFPTEDNDDRIVGGYTCQEHSVPYQVSLNAGSHICGGSLITDQWVLSAAHCYHPQLQVRLGEHNIYEIEGAEQFIDAAKMILHPDYDKWTVDNDIMLIKLKSPATLNSKVSTIPLPQYCPTAGTECLVSGWGVLKFGFESPSVLQCLDAPVLSDSVCHKAYPRQITNNMFCLGFLEGGKDSCQYDSGGPVVCNGEVQGIVSWGDGCALEGKPGVYTKVCNYLNWIHQTIAEN.

The N-terminal stretch at 1 to 15 (MKICIFFTLLGTVAA) is a signal peptide. A propeptide spans 16-24 (FPTEDNDDR) (activation peptide). Residues 25-244 (IVGGYTCQEH…YLNWIHQTIA (220 aa)) form the Peptidase S1 domain. 6 disulfides stabilise this stretch: Cys-31–Cys-160, Cys-49–Cys-65, Cys-133–Cys-233, Cys-140–Cys-206, Cys-171–Cys-185, and Cys-196–Cys-220. His-64 functions as the Charge relay system in the catalytic mechanism. 3 residues coordinate Ca(2+): Glu-76, Asn-78, and Glu-86. Catalysis depends on Asp-108, which acts as the Charge relay system. The active-site Charge relay system is the Ser-200.

It belongs to the peptidase S1 family. Ca(2+) serves as cofactor.

It is found in the secreted. Its subcellular location is the extracellular space. The catalysed reaction is Preferential cleavage: Arg-|-Xaa, Lys-|-Xaa.. This Rattus norvegicus (Rat) protein is Trypsin V-A.